The chain runs to 73 residues: MRTIISLLLLSAMVFAVIEAISLEEGLQLFEGERGCVGENQQCADWARPHCCSGYYCTCRYFPKCICRKDSGK.

Positions 1–20 (MRTIISLLLLSAMVFAVIEA) are cleaved as a signal peptide. The propeptide occupies 21–34 (ISLEEGLQLFEGER). 4 disulfides stabilise this stretch: Cys36/Cys52, Cys43/Cys57, Cys51/Cys67, and Cys59/Cys65. The residue at position 71 (Ser71) is a Serine amide.

Belongs to the neurotoxin 07 (Beta/delta-agtx) family. 03 (aga-4) subfamily. Aga sub-subfamily. Expressed by the venom gland.

It is found in the secreted. In terms of biological role, insecticidal neurotoxin that induces an irreversible spastic paralysis when injected into insects. Modifies presynaptic voltage-gated sodium channels (Nav), causing them to open at the normal resting potential of the nerve. This leads to spontaneous release of neurotransmitter and repetitive action potentials in motor neurons. The protein is U3-agatoxin-Ao1j of Agelena orientalis (Funnel-web spider).